Reading from the N-terminus, the 205-residue chain is Phosphoserine phosphatase ThrH (205 aa).

The active-site Nucleophile is Asp7. Mg(2+)-binding residues include Asp7 and Glu9. The Proton donor role is filled by Glu9. Substrate contacts are provided by residues Glu15, Arg46, 90-91 (SD), and Lys133. Asp152 provides a ligand contact to Mg(2+). Asn155 serves as a coordination point for substrate.

Belongs to the thrH family. Requires Mg(2+) as cofactor.

It carries out the reaction O-phospho-L-serine + H2O = L-serine + phosphate. It catalyses the reaction O-phospho-D-serine + H2O = D-serine + phosphate. Its pathway is amino-acid biosynthesis; L-serine biosynthesis; L-serine from 3-phospho-D-glycerate: step 3/3. Functionally, phosphoserine phosphatase that mediates dephosphorylation of phosphoserine in the serine biosynthesis pathway. Also able to dephosphorylate other substrates such as phospho-L(or D)-threonine, with lower activity. Shows phosphoserine:homoserine phosphotransferase activity by transferring the phosphoryl group to homoserine using phosphoserine as the phosphoryl group donor. In Pseudomonas aeruginosa (strain ATCC 15692 / DSM 22644 / CIP 104116 / JCM 14847 / LMG 12228 / 1C / PRS 101 / PAO1), this protein is Phosphoserine phosphatase ThrH (thrH).